The following is a 377-amino-acid chain: Caspase-4 (377 aa).

A required for LPS-binding region spans residues 1-59 (MAEGNHRKKPLKVLESLGKDFLTGVLDNLVEQNVLNWKEEEKKKYYDAKTEDKVRVMAD). A propeptide spanning residues 1–80 (MAEGNHRKKP…MLLQTFFNID (80 aa)) is cleaved from the precursor. One can recognise a CARD domain in the interval 1–91 (MAEGNHRKKP…ISPNKKAHPN (91 aa)). At alanine 2 the chain carries N-acetylalanine. Serine 83 is subject to Phosphoserine. The tract at residues 84–104 (PNKKAHPNMEAGPPESGESTD) is disordered. Active-site residues include histidine 210 and cysteine 258. A propeptide spanning residues 271 to 289 (SPASLEVASSQSSENLEED) is cleaved from the precursor. The residue at position 314 (arginine 314) is a (Microbial infection) ADP-riboxanated arginine.

It belongs to the peptidase C14A family. As to quaternary structure, heterotetramer that consists of two anti-parallel arranged heterodimers, each one formed by a 20 kDa (Caspase-4 subunit p20) and a 10 kDa (Caspase-4 subunit p10) subunit. Upon direct LPS-binding, forms large homooligomers, resulting in its activation. These oligomers are often referred to as 'non-canonical inflammasomes'. In its precursor form, interacts with TMEM214; this interaction is required for association with the endoplasmic reticulum membrane. Interacts with CASP1. Interacts with NOD2. Interacts with SERPINB1; this interaction regulates CASP4 activity. In terms of assembly, heterotetramer that consists of two anti-parallel arranged heterodimers, each one formed by a 20 kDa (Caspase-4 subunit p20) and a 10 kDa (Caspase-4 subunit p10) subunit. (Microbial infection) Interacts with NleF protein from pathogenic E.coli; this interaction leads to enzyme inhibition. As to quaternary structure, (Microbial infection) Interacts with cathepsin CTSG; the interaction is promoted by the Td92 surface protein of the periodontal pathogen T.denticola and leads to CASP4 activation. Post-translationally, in response to activation signals, undergoes autoproteolytic cleavage and activation. In terms of processing, (Microbial infection) ADP-riboxanation by S.flexneri OspC3 blocks CASP4 autoprocessing, preventing CASP4 activation and ability to recognize and cleave GSDMD, thereby thwarting the inflammasome/pyroptosis-mediated defense. As to expression, widely expressed, including in keratinocytes and colonic and small intestinal epithelial cells (at protein level). Not detected in brain.

The protein localises to the cytoplasm. Its subcellular location is the cytosol. It localises to the endoplasmic reticulum membrane. It is found in the mitochondrion. The protein resides in the inflammasome. The protein localises to the secreted. It catalyses the reaction Strict requirement for Asp at the P1 position. It has a preferred cleavage sequence of Tyr-Val-Ala-Asp-|- but also cleaves at Asp-Glu-Val-Asp-|-.. Its activity is regulated as follows. Activated by homooligomerization induced by direct binding to cytosolic LPS, in a TLR4-independent manner. In addition to LPS, CASP4/CASP11 may also be activated by oxidized phospholipid 1-palmitoyl-2-arachidonoyl- sn-glycero-3-phosphorylcholine, an oxidized phospholipid (oxPAPC), in dendritic cells, promoting adaptive immunity. The role of oxPAPC is however unclear and another report suggests that oxPAPC competes with LPS-binding and inhibits the non-canonical inflammasome in macrophages. Its function is as follows. Inflammatory caspase that acts as the effector of the non-canonical inflammasome by mediating lipopolysaccharide (LPS)-induced pyroptosis. Also indirectly activates the NLRP3 and NLRP6 inflammasomes. Acts as a thiol protease that cleaves a tetrapeptide after an Asp residue at position P1: catalyzes cleavage of CGAS, GSDMD and IL18. Effector of the non-canonical inflammasome independently of NLRP3 inflammasome and CASP1: the non-canonical inflammasome promotes pyroptosis through GSDMD cleavage without involving secretion of cytokine IL1B. In the non-canonical inflammasome, CASP4 is activated by direct binding to the lipid A moiety of LPS without the need of an upstream sensor. LPS-binding promotes CASP4 activation and CASP4-mediated cleavage of GSDMD and IL18, followed by IL18 secretion through the GSDMD pore, pyroptosis of infected cells and their extrusion into the gut lumen. Also indirectly promotes secretion of mature cytokines (IL1A and HMGB1) downstream of GSDMD-mediated pyroptosis via activation of the NLRP3 and NLRP6 inflammasomes. Involved in NLRP3-dependent CASP1 activation and IL1B secretion in response to non-canonical activators, such as UVB radiation or cholera enterotoxin. Involved in NLRP6 inflammasome-dependent activation in response to lipoteichoic acid (LTA), a cell-wall component of Gram-positive bacteria, which leads to CASP1 activation and IL1B secretion. Involved in LPS-induced IL6 secretion; this activity may not require caspase enzymatic activity. The non-canonical inflammasome is required for innate immunity to cytosolic, but not vacuolar, bacteria. Plays a crucial role in the restriction of S.typhimurium replication in colonic epithelial cells during infection. Activation of the non-canonical inflammasome in brain endothelial cells can lead to excessive pyroptosis, leading to blood-brain barrier breakdown. Pyroptosis limits bacterial replication, while cytokine secretion promotes the recruitment and activation of immune cells and triggers mucosal inflammation. May also act as an activator of adaptive immunity in dendritic cells, following activation by oxidized phospholipid 1-palmitoyl-2-arachidonoyl- sn-glycero-3-phosphorylcholine, an oxidized phospholipid (oxPAPC). Involved in cell death induced by endoplasmic reticulum stress and by treatment with cytotoxic APP peptides found in Alzheimer's patient brains. Cleavage of GSDMD is not strictly dependent on the consensus cleavage site but depends on an exosite interface on CASP4 that recognizes and binds the Gasdermin-D, C-terminal (GSDMD-CT) part. Catalyzes cleavage and maturation of IL18; IL18 processing also depends of the exosite interface on CASP4. In contrast, it does not directly process IL1B. During non-canonical inflammasome activation, cuts CGAS and may play a role in the regulation of antiviral innate immune activation. In terms of biological role, (Microbial infection) In response to the Td92 surface protein of the periodontal pathogen T.denticola, activated by cathepsin CTSG which leads to production and secretion of IL1A and pyroptosis of gingival fibroblasts. The sequence is that of Caspase-4 from Homo sapiens (Human).